An 827-amino-acid polypeptide reads, in one-letter code: SID1 transmembrane family member 1 (827 aa).

Positions 1-19 (MLDCLRLALLCALPWLLRA) are cleaved as a signal peptide. Topologically, residues 20–309 (AVPGHQEEPL…SIKESVYVKS (290 aa)) are extracellular. N67, N83, N136, and N282 each carry an N-linked (GlcNAc...) asparagine glycan. Residues 310–330 (SLFSIFVFLSFYLGCLLVVLV) traverse the membrane as a helical segment. Topologically, residues 331-442 (HHVRFQRKSI…DRRIVSKKYK (112 aa)) are cytoplasmic. The tract at residues 344-409 (FGSSDGSGNM…VEESDFDTMP (66 aa)) is disordered. A compositionally biased stretch (low complexity) spans 375–386 (SSSSPGRQMSSS). Residues 398–409 (SSVEESDFDTMP) are compositionally biased toward acidic residues. Residues 443 to 463 (IYFWNIITIAVFYALPVMQLV) form a helical membrane-spanning segment. At 464–494 (ITYQTVVNVTGNQDICYYNFLCAHPLGVLSA) the chain is on the extracellular side. An N-linked (GlcNAc...) asparagine glycan is attached at N471. Residues 495–515 (FNNILSNLGHVLLGFLFLLIV) traverse the membrane as a helical segment. Residues 516–541 (LRRDLLHRRALEAKDIFAMEYGIPKH) lie on the Cytoplasmic side of the membrane. The chain crosses the membrane as a helical span at residues 542-562 (FGLFYAMGIALMMEGVLSACY). Residues 563–572 (HVCPNYSNFQ) are Extracellular-facing. Residue N567 is glycosylated (N-linked (GlcNAc...) asparagine). Residues 573-590 (FDTSFMYMIAGLCMLKLY) traverse the membrane as a helical segment. The Cytoplasmic segment spans residues 591–600 (QTRHPDINAS). A helical membrane pass occupies residues 601–621 (AYSAYASFAVVITLTVLGVVF). The Extracellular portion of the chain corresponds to 622 to 626 (GKNDV). A helical membrane pass occupies residues 627-647 (WFWIIFSAIHILSSLALSTQI). At 648–683 (YYMGRFKIDLGIFRRAAMVFYTDCIQQCSRPLYMDR) the chain is on the cytoplasmic side. Residues 684–704 (MVLLIVGNLVNWSFAFFGLIY) form a helical membrane-spanning segment. Residues 705 to 710 (RPRDFA) are Extracellular-facing. Residues 711–731 (SYMLGIFICNLLLYLAFYIIM) traverse the membrane as a helical segment. Topologically, residues 732 to 741 (KLRSSEKVLP) are cytoplasmic. A helical transmembrane segment spans residues 742–762 (LPVFCIAATAVVWAAALYFFF). The Extracellular segment spans residues 763-791 (QNLSSWEGTPAESREKNRECVLLDFFDDH). N-linked (GlcNAc...) asparagine glycosylation is present at N764. The helical transmembrane segment at 792-812 (DIWHFLSATALFFSFLVLLTL) threads the bilayer. The Cytoplasmic segment spans residues 813–827 (DDDLDVVRRDQIPVF).

Belongs to the SID1 family.

It localises to the membrane. In terms of biological role, in vitro binds long double-stranded RNA (dsRNA) (500 and 700 base pairs), but not dsRNA shorter than 300 bp. Not involved in RNA autophagy, a process in which RNA is directly imported into lysosomes in an ATP-dependent manner, and degraded. The sequence is that of SID1 transmembrane family member 1 (Sidt1) from Mus musculus (Mouse).